The primary structure comprises 336 residues: Dihydroorotate dehydrogenase (quinone) (336 aa).

Residues A62 to K66 and T86 each bind FMN. K66 contributes to the substrate binding site. N111–F115 lines the substrate pocket. 2 residues coordinate FMN: N139 and N172. N172 is a binding site for substrate. S175 functions as the Nucleophile in the catalytic mechanism. N177 serves as a coordination point for substrate. FMN-binding residues include K217 and T245. Substrate is bound at residue N246 to T247. FMN contacts are provided by residues G268, G297, and Y318–S319.

Belongs to the dihydroorotate dehydrogenase family. Type 2 subfamily. As to quaternary structure, monomer. FMN is required as a cofactor.

The protein resides in the cell membrane. The enzyme catalyses (S)-dihydroorotate + a quinone = orotate + a quinol. The protein operates within pyrimidine metabolism; UMP biosynthesis via de novo pathway; orotate from (S)-dihydroorotate (quinone route): step 1/1. Functionally, catalyzes the conversion of dihydroorotate to orotate with quinone as electron acceptor. The chain is Dihydroorotate dehydrogenase (quinone) from Yersinia enterocolitica serotype O:8 / biotype 1B (strain NCTC 13174 / 8081).